A 554-amino-acid polypeptide reads, in one-letter code: Glucose-6-phosphate isomerase (554 aa).

The active-site Proton donor is the glutamate 358. Residues histidine 389 and lysine 515 contribute to the active site. Residues 527–540 (ANNSPAPQSDSSTD) are compositionally biased toward polar residues. The tract at residues 527–554 (ANNSPAPQSDSSTDALVRRYRSERGRTS) is disordered. The span at 542–554 (LVRRYRSERGRTS) shows a compositional bias: basic and acidic residues.

Belongs to the GPI family.

It localises to the cytoplasm. It catalyses the reaction alpha-D-glucose 6-phosphate = beta-D-fructose 6-phosphate. The protein operates within carbohydrate biosynthesis; gluconeogenesis. It functions in the pathway carbohydrate degradation; glycolysis; D-glyceraldehyde 3-phosphate and glycerone phosphate from D-glucose: step 2/4. In terms of biological role, catalyzes the reversible isomerization of glucose-6-phosphate to fructose-6-phosphate. This Mycolicibacterium paratuberculosis (strain ATCC BAA-968 / K-10) (Mycobacterium paratuberculosis) protein is Glucose-6-phosphate isomerase.